We begin with the raw amino-acid sequence, 556 residues long: Membrane protein insertase YidC (556 aa).

The next 5 helical transmembrane spans lie at Ile-6–Asp-26, Leu-332–Met-352, Val-358–Tyr-378, Leu-428–Leu-448, and Val-501–Val-521.

The protein belongs to the OXA1/ALB3/YidC family. Type 1 subfamily. In terms of assembly, interacts with the Sec translocase complex via SecD. Specifically interacts with transmembrane segments of nascent integral membrane proteins during membrane integration.

Its subcellular location is the cell inner membrane. Required for the insertion and/or proper folding and/or complex formation of integral membrane proteins into the membrane. Involved in integration of membrane proteins that insert both dependently and independently of the Sec translocase complex, as well as at least some lipoproteins. Aids folding of multispanning membrane proteins. The chain is Membrane protein insertase YidC from Legionella pneumophila (strain Paris).